Reading from the N-terminus, the 1197-residue chain is ATP-dependent helicase/nuclease subunit A (1197 aa).

The 457-residue stretch at 2–458 (KNWTTEQQAA…IDLAKNFRSR (457 aa)) folds into the UvrD-like helicase ATP-binding domain. An ATP-binding site is contributed by 23-30 (AAAGSGKT). The UvrD-like helicase C-terminal domain occupies 485 to 774 (RAALYQGASF…RIMSIHKSKG (290 aa)).

It belongs to the helicase family. AddA subfamily. Heterodimer of AddA and AddB/RexB. It depends on Mg(2+) as a cofactor.

The catalysed reaction is Couples ATP hydrolysis with the unwinding of duplex DNA by translocating in the 3'-5' direction.. The enzyme catalyses ATP + H2O = ADP + phosphate + H(+). Its function is as follows. The heterodimer acts as both an ATP-dependent DNA helicase and an ATP-dependent, dual-direction single-stranded exonuclease. Recognizes the chi site generating a DNA molecule suitable for the initiation of homologous recombination. The AddA nuclease domain is required for chi fragment generation; this subunit has the helicase and 3' -&gt; 5' nuclease activities. The chain is ATP-dependent helicase/nuclease subunit A from Alkaliphilus metalliredigens (strain QYMF).